A 342-amino-acid polypeptide reads, in one-letter code: L-threonine 3-dehydrogenase (342 aa).

Cysteine 38 is a Zn(2+) binding site. Active-site charge relay system residues include threonine 40 and histidine 43. Zn(2+) contacts are provided by histidine 63, glutamate 64, cysteine 93, cysteine 96, cysteine 99, and cysteine 107. NAD(+)-binding positions include isoleucine 175, aspartate 195, arginine 200, 262–264 (LGL), and 286–287 (IY).

The protein belongs to the zinc-containing alcohol dehydrogenase family. In terms of assembly, homotetramer. Requires Zn(2+) as cofactor.

It localises to the cytoplasm. The catalysed reaction is L-threonine + NAD(+) = (2S)-2-amino-3-oxobutanoate + NADH + H(+). Its pathway is amino-acid degradation; L-threonine degradation via oxydo-reductase pathway; glycine from L-threonine: step 1/2. In terms of biological role, catalyzes the NAD(+)-dependent oxidation of L-threonine to 2-amino-3-ketobutyrate. The polypeptide is L-threonine 3-dehydrogenase (Streptomyces avermitilis (strain ATCC 31267 / DSM 46492 / JCM 5070 / NBRC 14893 / NCIMB 12804 / NRRL 8165 / MA-4680)).